Reading from the N-terminus, the 90-residue chain is Small ribosomal subunit protein uS15 (90 aa).

Belongs to the universal ribosomal protein uS15 family. As to quaternary structure, part of the 30S ribosomal subunit. Forms a bridge to the 50S subunit in the 70S ribosome, contacting the 23S rRNA.

In terms of biological role, one of the primary rRNA binding proteins, it binds directly to 16S rRNA where it helps nucleate assembly of the platform of the 30S subunit by binding and bridging several RNA helices of the 16S rRNA. Its function is as follows. Forms an intersubunit bridge (bridge B4) with the 23S rRNA of the 50S subunit in the ribosome. This chain is Small ribosomal subunit protein uS15, found in Wolbachia pipientis wMel.